Reading from the N-terminus, the 455-residue chain is 3-phosphoshikimate 1-carboxyvinyltransferase (455 aa).

Over residues 1–19 the composition is skewed to polar residues; sequence MSHGASSRPATARKSSGLS. Residues 1-25 are disordered; it reads MSHGASSRPATARKSSGLSGTVRIP. Position 28 (K28) interacts with phosphoenolpyruvate. Positions 29 and 33 each coordinate 3-phosphoshikimate. R128 is a binding site for phosphoenolpyruvate. 3-phosphoshikimate is bound by residues S173, A174, Q175, D326, and K353. Residue Q175 coordinates phosphoenolpyruvate. D326 acts as the Proton acceptor in catalysis. Residues R357 and R405 each coordinate phosphoenolpyruvate.

The protein belongs to the EPSP synthase family. In terms of assembly, monomer.

The protein localises to the cytoplasm. The enzyme catalyses 3-phosphoshikimate + phosphoenolpyruvate = 5-O-(1-carboxyvinyl)-3-phosphoshikimate + phosphate. It functions in the pathway metabolic intermediate biosynthesis; chorismate biosynthesis; chorismate from D-erythrose 4-phosphate and phosphoenolpyruvate: step 6/7. Its activity is regulated as follows. Is resistant to inhibition by glyphosate (glyphosate-tolerant) like other members of class II EPSPS, in contrast to class I EPSPS, which is glyphosate-sensitive. Is much less sensitive to inhibition by the (R)-difluoromethyl and (R)-phosphonate analogs of the tetrahedral reaction intermediate than the representative class I EPSPS from E.coli. Is highly activated in the presence of cations, such as NH4(+), Rb(+), and K(+). Functionally, catalyzes the transfer of the enolpyruvyl moiety of phosphoenolpyruvate (PEP) to the 5-hydroxyl of shikimate-3-phosphate (S3P) to produce enolpyruvyl shikimate-3-phosphate and inorganic phosphate. The chain is 3-phosphoshikimate 1-carboxyvinyltransferase from Agrobacterium sp. (strain CP4).